The primary structure comprises 1035 residues: FERM domain-containing protein 4B (1035 aa).

Residues 59 to 361 (RHCQVHLLDD…SQHQFYLDRK (303 aa)) enclose the FERM domain. Position 372 is a phosphoserine (S372). Coiled-coil stretches lie at residues 414–451 (QDSE…LKKI) and 535–559 (KQDY…RIRC). The necessary for adherens junction and tight junction localization stretch occupies residues 542-972 (VKRLQEIENS…TQLTIGLSEY (431 aa)). Disordered regions lie at residues 563-615 (PSQK…ILPP), 631-699 (NEQF…LESQ), 713-738 (FTLS…SQSS), and 754-798 (TQTL…SKGQ). The span at 571-590 (PPEDIIPSESSSLSDTTTYD) shows a compositional bias: low complexity. Positions 594 to 607 (DSFTLAGQRPSSVP) are enriched in polar residues. S609 bears the Phosphoserine mark. The span at 635 to 644 (MDTRHSREML) shows a compositional bias: basic and acidic residues. Composition is skewed to polar residues over residues 664 to 699 (MPTT…LESQ) and 715 to 725 (LSKSQRSSSTE). S698 is modified (phosphoserine). Basic residues predominate over residues 762-771 (RGRRRSKKHS). Residues 772 to 782 (VSTSNSGSMPN) show a composition bias toward polar residues. K883 is covalently cross-linked (Glycyl lysine isopeptide (Lys-Gly) (interchain with G-Cter in SUMO2)). 3 disordered regions span residues 906-926 (RASG…SDRG), 939-958 (PCSP…TNAS), and 994-1035 (PSRQ…GTLV). A compositionally biased stretch (polar residues) spans 907-921 (ASGQKDQGHSPQTSF). S916 carries the post-translational modification Phosphoserine. Positions 941–958 (SPSSRASSYSSVSSTNAS) are enriched in low complexity. Positions 1019–1035 (SEQRLFWHEDSKPGTLV) are enriched in basic and acidic residues. A Glycyl lysine isopeptide (Lys-Gly) (interchain with G-Cter in SUMO2) cross-link involves residue K1030.

In terms of assembly, interacts with CYTH3. Interacts with PARD3. Interacts with CYTH1. In terms of tissue distribution, isoform 1 is expressed in the brain. Isoform 2 is expressed in the lung (at protein level).

The protein resides in the cytoplasm. It is found in the cytoskeleton. Its subcellular location is the cell junction. The protein localises to the tight junction. It localises to the adherens junction. Functionally, member of GRP1 signaling complexes that are acutely recruited to plasma membrane ruffles in response to insulin receptor signaling. May function as a scaffolding protein that regulates epithelial cell polarity by connecting ARF6 activation with the PAR3 complex. Plays a redundant role with FRMD4A in epithelial polarization. This Mus musculus (Mouse) protein is FERM domain-containing protein 4B (Frmd4b).